A 507-amino-acid chain; its full sequence is Archaeal-type glutamate synthase [NADPH] (507 aa).

4Fe-4S ferredoxin-type domains are found at residues 10–39 and 41–70; these read FVVERDDYKCIRCLACVRVCSYGANFYDEN and NRVYTENTKCVGCHFCEAICPTEAITVRKN. The [4Fe-4S] cluster site is built by cysteine 19, cysteine 22, cysteine 25, cysteine 29, cysteine 50, cysteine 53, cysteine 56, and cysteine 60.

Belongs to the glutamate synthase family. FMN serves as cofactor.

The catalysed reaction is 2 L-glutamate + NADP(+) = L-glutamine + 2-oxoglutarate + NADPH + H(+). In Thermotoga maritima (strain ATCC 43589 / DSM 3109 / JCM 10099 / NBRC 100826 / MSB8), this protein is Archaeal-type glutamate synthase [NADPH].